A 303-amino-acid polypeptide reads, in one-letter code: WD repeat-containing protein 38 (303 aa).

7 WD repeats span residues 24–63, 66–105, 108–147, 150–189, 195–233, 236–277, and 279–303; these read QHHG…LLWR, GHRG…CLHV, GHQR…RVHL, GHCD…PVVS, GHTG…LPLQ, GHTI…ETLK, and MLDV…AVTR.

The protein is WD repeat-containing protein 38 (Wdr38) of Mus musculus (Mouse).